Reading from the N-terminus, the 363-residue chain is tRNA/tmRNA (uracil-C(5))-methyltransferase (363 aa).

S-adenosyl-L-methionine contacts are provided by Gln-187, Tyr-215, Asn-220, Glu-236, and Asp-296. The Nucleophile role is filled by Cys-321. Glu-355 serves as the catalytic Proton acceptor.

It belongs to the class I-like SAM-binding methyltransferase superfamily. RNA M5U methyltransferase family. TrmA subfamily.

The catalysed reaction is uridine(54) in tRNA + S-adenosyl-L-methionine = 5-methyluridine(54) in tRNA + S-adenosyl-L-homocysteine + H(+). It catalyses the reaction uridine(341) in tmRNA + S-adenosyl-L-methionine = 5-methyluridine(341) in tmRNA + S-adenosyl-L-homocysteine + H(+). Functionally, dual-specificity methyltransferase that catalyzes the formation of 5-methyluridine at position 54 (m5U54) in all tRNAs, and that of position 341 (m5U341) in tmRNA (transfer-mRNA). The sequence is that of tRNA/tmRNA (uracil-C(5))-methyltransferase from Haemophilus influenzae (strain 86-028NP).